The sequence spans 79 residues: Acyl carrier protein (79 aa).

One can recognise a Carrier domain in the interval 3-78 (QEILEKVRSI…DAVSYIQEKK (76 aa)). At serine 38 the chain carries O-(pantetheine 4'-phosphoryl)serine.

Belongs to the acyl carrier protein (ACP) family. In terms of processing, 4'-phosphopantetheine is transferred from CoA to a specific serine of apo-ACP by AcpS. This modification is essential for activity because fatty acids are bound in thioester linkage to the sulfhydryl of the prosthetic group.

It is found in the cytoplasm. The protein operates within lipid metabolism; fatty acid biosynthesis. In terms of biological role, carrier of the growing fatty acid chain in fatty acid biosynthesis. The protein is Acyl carrier protein of Synechococcus sp. (strain RCC307).